A 285-amino-acid chain; its full sequence is Probable endonuclease 4 (285 aa).

Zn(2+)-binding residues include His-69, His-109, Glu-145, Asp-179, His-182, His-216, Asp-229, His-231, and Glu-261.

The protein belongs to the AP endonuclease 2 family. Zn(2+) is required as a cofactor.

The enzyme catalyses Endonucleolytic cleavage to 5'-phosphooligonucleotide end-products.. Its function is as follows. Endonuclease IV plays a role in DNA repair. It cleaves phosphodiester bonds at apurinic or apyrimidinic (AP) sites, generating a 3'-hydroxyl group and a 5'-terminal sugar phosphate. In Shigella dysenteriae serotype 1 (strain Sd197), this protein is Probable endonuclease 4.